Reading from the N-terminus, the 110-residue chain is Small ribosomal subunit protein uS10 (110 aa).

It belongs to the universal ribosomal protein uS10 family. Part of the 30S ribosomal subunit.

Involved in the binding of tRNA to the ribosomes. In Coxiella burnetii (strain Dugway 5J108-111), this protein is Small ribosomal subunit protein uS10.